We begin with the raw amino-acid sequence, 392 residues long: MTVLPKTLLLLGSGELGKEITIAAQRLGCHVIACDRYSGAPAMQVADQAEVLDMNNSEALTAIIRHHQPDVVIPEIEALAVNALAELENEGITVIPTARATAVTMNRDRIRDLASEELALLTPKFAYAGSAEELRHAAEPLGWPVVVKPVMSSSGKGQSVVSNPEGLRQAWQAAMAGSRGNSPRVIVEEFLHFDLEITLLTIRQEDGSTLFCEPIGHEQIGGDYQCSWQPAELSTEQLKQAQSMALSITENLGGVGLFGVEFFLCGNEVIFSELSPRPHDTGLVTLISQNLSEFELHLRAVLKLPIPTIQTADAAASRVILAKDNLSSISYKGVEKALSEIDTQILLFGKPNARPRRRMGVALAKGKSLEAVRSKADRAAASIQVIKGKGVT.

N(1)-(5-phospho-beta-D-ribosyl)glycinamide contacts are provided by residues 15-16 and glutamate 75; that span reads EL. ATP-binding positions include arginine 107, lysine 148, 153–158, 188–191, and glutamate 196; these read SSGKGQ and EEFL. The ATP-grasp domain occupies 112-302; the sequence is DLASEELALL…EFELHLRAVL (191 aa). Mg(2+)-binding residues include glutamate 261 and glutamate 273. Residues aspartate 280, lysine 350, and 357–358 each bind N(1)-(5-phospho-beta-D-ribosyl)glycinamide; that span reads RR.

Belongs to the PurK/PurT family. Homodimer.

The catalysed reaction is N(1)-(5-phospho-beta-D-ribosyl)glycinamide + formate + ATP = N(2)-formyl-N(1)-(5-phospho-beta-D-ribosyl)glycinamide + ADP + phosphate + H(+). It participates in purine metabolism; IMP biosynthesis via de novo pathway; N(2)-formyl-N(1)-(5-phospho-D-ribosyl)glycinamide from N(1)-(5-phospho-D-ribosyl)glycinamide (formate route): step 1/1. Involved in the de novo purine biosynthesis. Catalyzes the transfer of formate to 5-phospho-ribosyl-glycinamide (GAR), producing 5-phospho-ribosyl-N-formylglycinamide (FGAR). Formate is provided by PurU via hydrolysis of 10-formyl-tetrahydrofolate. This Prochlorococcus marinus (strain MIT 9303) protein is Formate-dependent phosphoribosylglycinamide formyltransferase.